Reading from the N-terminus, the 603-residue chain is Geraniol synthase Tps-5073G30, chloroplastic (603 aa).

A chloroplast-targeting transit peptide spans 1 to 35 (MCSISQKVVIGLNKAAANNNLQNLDRRGFKTRCVS). Residues Arg-319, Asp-356, Asp-360, Arg-497, and Asp-500 each coordinate (2E)-geranyl diphosphate. 2 residues coordinate Mg(2+): Asp-356 and Asp-360. Residues 356–360 (DDVYD) carry the DDXXD motif motif. Mg(2+) is bound by residues Asp-500, Thr-504, and Glu-508.

Belongs to the terpene synthase family. Tpsb subfamily. As to quaternary structure, monomer. Mg(2+) serves as cofactor. Mn(2+) is required as a cofactor.

Its subcellular location is the plastid. The protein resides in the chloroplast. The enzyme catalyses (2E)-geranyl diphosphate + H2O = (2E)-geraniol + diphosphate. It functions in the pathway secondary metabolite biosynthesis; terpenoid biosynthesis. Monoterpene synthase (mono-TPS) involved in the biosynthesis of monoterpenes natural products. Catalyzes the conversion of (2E)-geranyl diphosphate (GPP) into geraniol. This is Geraniol synthase Tps-5073G30, chloroplastic from Perilla frutescens (Beefsteak mint).